The chain runs to 830 residues: Isethionate sulfite-lyase (830 aa).

A PFL domain is found at 31 to 700; that stretch reads KRVFKLLERF…VVSATPNGRV (670 aa). Residues Arg189, Gln193, 468–470, and Arg678 each bind 2-hydroxyethane-1-sulfonate; that span reads CIE. The Cysteine radical intermediate role is filled by Cys468. Residue Glu470 is the Proton acceptor of the active site. In terms of domain architecture, Glycine radical spans 707-830; sequence DGSSPSHGAD…LIARTGHDQM (124 aa). Glycine radical is present on Gly805.

The protein belongs to the glycyl radical enzyme (GRE) family. Homodimer. Post-translationally, requires the activating protein IslB to generate the key active site glycyl radical on Gly-805 that is involved in catalysis.

The enzyme catalyses 2-hydroxyethane-1-sulfonate = acetaldehyde + sulfite + H(+). It functions in the pathway organosulfur degradation; alkanesulfonate degradation. Functionally, involved in an anaerobic respiration pathway that converts the sulfonate taurine (2-aminoethanesulfonate) to ammonia, acetate and sulfide. Catalyzes the radical-mediated C-S bond cleavage of isethionate (2-hydroxyethanesulfonate) to form sulfite and acetaldehyde. Is not able to use any alternate organosulfonate or (S)-1,2-propanediol or choline as a substrate, showing that this enzyme is highly specific for isethionate. This chain is Isethionate sulfite-lyase, found in Bilophila wadsworthia (strain 3_1_6).